The primary structure comprises 33 residues: Cytochrome b6-f complex subunit 8 (33 aa).

Residues 2–22 (LISLGWAALAATFTFSIAMVV) form a helical membrane-spanning segment.

The protein belongs to the PetN family. In terms of assembly, the 4 large subunits of the cytochrome b6-f complex are cytochrome b6, subunit IV (17 kDa polypeptide, PetD), cytochrome f and the Rieske protein, while the 4 small subunits are PetG, PetL, PetM and PetN. The complex functions as a dimer.

Its subcellular location is the cellular thylakoid membrane. Component of the cytochrome b6-f complex, which mediates electron transfer between photosystem II (PSII) and photosystem I (PSI), cyclic electron flow around PSI, and state transitions. The sequence is that of Cytochrome b6-f complex subunit 8 from Synechococcus sp. (strain RCC307).